A 463-amino-acid chain; its full sequence is A-type ATP synthase subunit B (463 aa).

It belongs to the ATPase alpha/beta chains family. As to quaternary structure, has multiple subunits with at least A(3), B(3), C, D, E, F, H, I and proteolipid K(x).

The protein resides in the cell membrane. Its function is as follows. Component of the A-type ATP synthase that produces ATP from ADP in the presence of a proton gradient across the membrane. The B chain is a regulatory subunit. The protein is A-type ATP synthase subunit B of Saccharolobus islandicus (strain Y.N.15.51 / Yellowstone #2) (Sulfolobus islandicus).